We begin with the raw amino-acid sequence, 852 residues long: MFFACYCALRTNVKKYRYQDEDGPHDHSLPRLTHEVRGPELVHVSEKNLSQIENVHGYVLQSHISPLKASPAPIIVNTDTLDTIPYVNGTEIEYEFEEITLERGNSGLGFSIAGGTDNPHIGDDPGIFITKIIPGGAAAEDGRLRVNDCILRVNEVDVSEVSHSKAVEALKEAGSIVRLYVRRRRPILETVVEIKLFKGPKGLGFSIAGGVGNQHIPGDNSIYVTKIIDGGAAQKDGRLQVGDRLLMVNNYSLEEVTHEEAVAILKNTSDVVYLKVGKPTTIYMTDPYGPPDITHSYSPPMENHLLSGNNGTLEYKTSLPPISPGRYSPIPKHMLGEDDYTRPPEPVYSTVNKLCDKPASPRHYSPVECDKSFLLSTPYPHYHLGLLPDSDMTSHSQHSTATRQPSVTLQRAISLEGEPRKVVLHKGSTGLGFNIVGGEDGEGIFVSFILAGGPADLSGELQRGDQILSVNGIDLRGASHEQAAAALKGAGQTVTIIAQYQPEDYARFEAKIHDLREQMMNHSMSSGSGSLRTNQKRSLYVRAMFDYDKSKDSGLPSQGLSFKYGDILHVINASDDEWWQARRVTLDGDSEEMGVIPSKRRVERKERARLKTVKFNAKPGVIDSKGDIPGLGDDGYGTKTLRGQEDLILSYEPVTRQEINYTRPVIILGPMKDRINDDLISEFPDKFGSCVPHTTRPKRDYEVDGRDYHFVISREQMEKDIQEHKFIEAGQYNDNLYGTSVQSVRFVAERGKHCILDVSGNAIKRLQVAQLYPIAIFIKPKSLEPLMEMNKRLTEEQAKKTYDRAIKLEQEFGEYFTAIVQGDTLEDIYNQCKLVIEEQSGPFIWIPSKEKL.

2 S-palmitoyl cysteine lipidation sites follow: Cys-5 and Cys-7. Position 28 is a phosphoserine (Ser-28). The residue at position 58 (Tyr-58) is a Phosphotyrosine. Ser-65 carries the post-translational modification Phosphoserine. 2 consecutive PDZ domains span residues 98–185 (EITL…RRRR) and 193–280 (EIKL…GKPT). Phosphoserine is present on residues Ser-307, Ser-328, Ser-360, Ser-365, Ser-406, and Ser-414. The PDZ 3 domain occupies 421–502 (KVVLHKGSTG…TVTIIAQYQP (82 aa)). Tyr-505 bears the Phosphotyrosine mark. 3 positions are modified to phosphoserine: Ser-528, Ser-530, and Ser-553. The SH3 domain occupies 536–606 (KRSLYVRAMF…PSKRRVERKE (71 aa)). A Guanylate kinase-like domain is found at 662-837 (TRPVIILGPM…IYNQCKLVIE (176 aa)). Phosphotyrosine is present on residues Tyr-732 and Tyr-737.

As to quaternary structure, interacts with NOS1/nNOS through second PDZ domain. Interacts with KCNJ2/Kir2.1 (via C-terminus) through one of its PDZ domains. Interacts with KCNJ4. Interacts with FRMPD4 (via C-terminus). Interacts through its PDZ domains with NETO1. Interacts with LRFN1, LRFN2 and LRFN4. Interacts with FASLG. Interacts with KCNJ4. Interacts with ADAM22. Interacts with DGKI (via PDZ-binding motif). Palmitoylation of isoform 1 and isoform 2 is not required for targeting to postsynaptic density. In terms of tissue distribution, brain. Highest levels of isoform 1 in cortex, olfactory bulb, thalamus, hypothalamus, striatum and hippocampus. Highest level of isoform 2 in olfactory bulb. Reduced levels in cortex and hippocampus. Highest level of isoform 4 in spinal cord. Low levels of isoform 4, isoform 6, and isoform 7 in superior cervical ganglion.

It localises to the cell membrane. It is found in the postsynaptic density. Its subcellular location is the synapse. The protein localises to the membrane. The protein resides in the cell projection. It localises to the axon. It is found in the perikaryon. Required for perception of chronic pain through NMDA receptor signaling. Regulates surface expression of NMDA receptors in dorsal horn neurons of the spinal cord. Interacts with the cytoplasmic tail of NMDA receptor subunits as well as inward rectifying potassium channels. Involved in regulation of synaptic stability at cholinergic synapses. Part of the postsynaptic protein scaffold of excitatory synapses. This chain is Disks large homolog 2 (Dlg2), found in Mus musculus (Mouse).